A 145-amino-acid polypeptide reads, in one-letter code: Mitochondrial import receptor subunit TOM20 homolog (145 aa).

The Mitochondrial intermembrane segment spans residues 1–6 (MVGRNS). The helical transmembrane segment at 7–24 (AIAAGVCGALFIGYCIYF) threads the bilayer. At 25-145 (DRKRRSDPNF…AQSLAEDDVE (121 aa)) the chain is on the cytoplasmic side. Residues Lys-35, Lys-56, Lys-61, and Lys-68 each participate in a glycyl lysine isopeptide (Lys-Gly) (interchain with G-Cter in ubiquitin) cross-link. A phosphoserine mark is found at Ser-135 and Ser-138.

It belongs to the Tom20 family. In terms of assembly, forms part of the preprotein translocase complex of the outer mitochondrial membrane (TOM complex) which consists of at least 7 different proteins (TOMM5, TOMM6, TOMM7, TOMM20, TOMM22, TOMM40 and TOMM70). Interacts with TOM22. Interacts with APEX1. Interacts with TBC1D21. Upon mitochondrial depolarization, interacts with PINK1; the interaction is required for PINK1-TOM-TIM23 supercomplex formation which is critical for PINK1 stabilization at the outer mitochondrial membrane, kinase activation and downstream mitophagy. In terms of processing, ubiquitinated by PRKN during mitophagy, leading to its degradation and enhancement of mitophagy. Deubiquitinated by USP30. As to expression, expressed in brain, kidney, stomach, colon, jejunum, ileum, testis, ovary and oviduct (at protein level). In the brain, expressed in neural cells of the cerebrum and cerebellum (at protein level). In the kidney, expressed in the proximal to distal tubule in the cortex and the outer and inner zones of the medulla (at protein level). In the stomach, expressed in the basal layer of stratified squamous epithelia in the forestomach and in the gastric pit and fundic gland of the glandular stomach (at protein level). Expressed in epithelial cells of the jejunum, ileum, and colon (at protein level). In the testis, expressed by spermatocytes and spermatogonia (at protein level). In the ovaries, expressed by follicular epithelial cells and corpus luteum cells (at protein level). In the oviduct, expressed in the epithelia of the isthmus and the ciliated cells of the ampulla (at protein level). Expressed in the sperm midpiece (at protein level).

The protein localises to the mitochondrion outer membrane. Functionally, central component of the receptor complex responsible for the recognition and translocation of cytosolically synthesized mitochondrial preproteins. Together with TOM22 functions as the transit peptide receptor at the surface of the mitochondrion outer membrane and facilitates the movement of preproteins into the TOM40 translocation pore. Required for the translocation across the mitochondrial outer membrane of cytochrome P450 monooxygenases. The protein is Mitochondrial import receptor subunit TOM20 homolog (Tomm20) of Mus musculus (Mouse).